The following is a 225-amino-acid chain: UPF0758 protein Sden_0326 (225 aa).

Residues 102-224 form the MPN domain; it reads ILTNPDLTRD…IVSFAERGWL (123 aa). The Zn(2+) site is built by H173, H175, and D186. The short motif at 173 to 186 is the JAMM motif element; the sequence is HNHPSGIAEPSQAD.

Belongs to the UPF0758 family.

The polypeptide is UPF0758 protein Sden_0326 (Shewanella denitrificans (strain OS217 / ATCC BAA-1090 / DSM 15013)).